A 151-amino-acid chain; its full sequence is D-aminoacyl-tRNA deacylase (151 aa).

Positions Gly-137–Pro-138 match the Gly-cisPro motif, important for rejection of L-amino acids motif.

This sequence belongs to the DTD family. As to quaternary structure, homodimer.

The protein localises to the cytoplasm. The catalysed reaction is glycyl-tRNA(Ala) + H2O = tRNA(Ala) + glycine + H(+). It carries out the reaction a D-aminoacyl-tRNA + H2O = a tRNA + a D-alpha-amino acid + H(+). Functionally, an aminoacyl-tRNA editing enzyme that deacylates mischarged D-aminoacyl-tRNAs. Also deacylates mischarged glycyl-tRNA(Ala), protecting cells against glycine mischarging by AlaRS. Acts via tRNA-based rather than protein-based catalysis; rejects L-amino acids rather than detecting D-amino acids in the active site. By recycling D-aminoacyl-tRNA to D-amino acids and free tRNA molecules, this enzyme counteracts the toxicity associated with the formation of D-aminoacyl-tRNA entities in vivo and helps enforce protein L-homochirality. The polypeptide is D-aminoacyl-tRNA deacylase (Fusobacterium nucleatum subsp. nucleatum (strain ATCC 25586 / DSM 15643 / BCRC 10681 / CIP 101130 / JCM 8532 / KCTC 2640 / LMG 13131 / VPI 4355)).